A 296-amino-acid chain; its full sequence is Methylsterol monooxygenase 1 (296 aa).

The next 2 helical transmembrane spans lie at leucine 55–isoleucine 75 and threonine 100–threonine 120. The Fatty acid hydroxylase domain occupies cysteine 145–threonine 274. A Histidine box-1 motif is present at residues histidine 157–histidine 161. Residues histidine 170–histidine 174 carry the Histidine box-2 motif. Residues phenylalanine 199–cysteine 219 form a helical membrane-spanning segment. The short motif at phenylalanine 249 to methionine 255 is the Histidine box-3 element.

It belongs to the sterol desaturase family. It depends on Fe cation as a cofactor.

The protein resides in the endoplasmic reticulum membrane. The enzyme catalyses 4,4-dimethyl-5alpha-cholest-7-en-3beta-ol + 6 Fe(II)-[cytochrome b5] + 3 O2 + 5 H(+) = 4alpha-carboxy-4beta-methyl-5alpha-cholest-7-ene-3beta-ol + 6 Fe(III)-[cytochrome b5] + 4 H2O. It participates in steroid biosynthesis; zymosterol biosynthesis; zymosterol from lanosterol: step 3/6. Its function is as follows. Catalyzes the first step in the removal of the two C-4 methyl groups of 4,4-dimethylzymosterol. This is Methylsterol monooxygenase 1 (MSMO1) from Gallus gallus (Chicken).